An 88-amino-acid chain; its full sequence is Apolipoprotein C-I (88 aa).

A signal peptide spans 1-26 (MRLLLSLPVLLVALSVVLERPAPAQA).

It belongs to the apolipoprotein C1 family.

The protein localises to the secreted. Functionally, inhibitor of lipoprotein binding to the low density lipoprotein (LDL) receptor, LDL receptor-related protein, and very low density lipoprotein (VLDL) receptor. Associates with high density lipoproteins (HDL) and the triacylglycerol-rich lipoproteins in the plasma and makes up about 10% of the protein of the VLDL and 2% of that of HDL. Appears to interfere directly with fatty acid uptake and is also the major plasma inhibitor of cholesteryl ester transfer protein (CETP). Binds free fatty acids and reduces their intracellular esterification. Modulates the interaction of APOE with beta-migrating VLDL and inhibits binding of beta-VLDL to the LDL receptor-related protein. In Tupaia glis (Common tree shrew), this protein is Apolipoprotein C-I (APOC1).